The chain runs to 166 residues: Large ribosomal subunit protein uL10 (166 aa).

Belongs to the universal ribosomal protein uL10 family. In terms of assembly, part of the ribosomal stalk of the 50S ribosomal subunit. The N-terminus interacts with L11 and the large rRNA to form the base of the stalk. The C-terminus forms an elongated spine to which L12 dimers bind in a sequential fashion forming a multimeric L10(L12)X complex.

In terms of biological role, forms part of the ribosomal stalk, playing a central role in the interaction of the ribosome with GTP-bound translation factors. This chain is Large ribosomal subunit protein uL10, found in Shewanella oneidensis (strain ATCC 700550 / JCM 31522 / CIP 106686 / LMG 19005 / NCIMB 14063 / MR-1).